Consider the following 288-residue polypeptide: Bifunctional protein FolD (288 aa).

NADP(+)-binding positions include glycine 166–serine 168, serine 191, and isoleucine 232.

Belongs to the tetrahydrofolate dehydrogenase/cyclohydrolase family. As to quaternary structure, homodimer.

It catalyses the reaction (6R)-5,10-methylene-5,6,7,8-tetrahydrofolate + NADP(+) = (6R)-5,10-methenyltetrahydrofolate + NADPH. The catalysed reaction is (6R)-5,10-methenyltetrahydrofolate + H2O = (6R)-10-formyltetrahydrofolate + H(+). It participates in one-carbon metabolism; tetrahydrofolate interconversion. Functionally, catalyzes the oxidation of 5,10-methylenetetrahydrofolate to 5,10-methenyltetrahydrofolate and then the hydrolysis of 5,10-methenyltetrahydrofolate to 10-formyltetrahydrofolate. This is Bifunctional protein FolD from Rickettsia canadensis (strain McKiel).